We begin with the raw amino-acid sequence, 428 residues long: Ribosomal RNA small subunit methyltransferase B (428 aa).

S-adenosyl-L-methionine-binding positions include 253–259 (CAAPGGK), Asp-276, Asp-302, and Asp-321. Residue Cys-374 is the Nucleophile of the active site.

Belongs to the class I-like SAM-binding methyltransferase superfamily. RsmB/NOP family.

The protein localises to the cytoplasm. It catalyses the reaction cytidine(967) in 16S rRNA + S-adenosyl-L-methionine = 5-methylcytidine(967) in 16S rRNA + S-adenosyl-L-homocysteine + H(+). In terms of biological role, specifically methylates the cytosine at position 967 (m5C967) of 16S rRNA. The sequence is that of Ribosomal RNA small subunit methyltransferase B from Citrobacter koseri (strain ATCC BAA-895 / CDC 4225-83 / SGSC4696).